Consider the following 554-residue polypeptide: Dihydroxy-acid dehydratase (554 aa).

Aspartate 78 provides a ligand contact to Mg(2+). [2Fe-2S] cluster is bound at residue cysteine 119. Positions 120 and 121 each coordinate Mg(2+). Lysine 121 is subject to N6-carboxylysine. Cysteine 191 lines the [2Fe-2S] cluster pocket. Mg(2+) is bound at residue glutamate 444. The active-site Proton acceptor is serine 470.

This sequence belongs to the IlvD/Edd family. Homodimer. The cofactor is [2Fe-2S] cluster. Requires Mg(2+) as cofactor.

The catalysed reaction is (2R)-2,3-dihydroxy-3-methylbutanoate = 3-methyl-2-oxobutanoate + H2O. It catalyses the reaction (2R,3R)-2,3-dihydroxy-3-methylpentanoate = (S)-3-methyl-2-oxopentanoate + H2O. Its pathway is amino-acid biosynthesis; L-isoleucine biosynthesis; L-isoleucine from 2-oxobutanoate: step 3/4. It participates in amino-acid biosynthesis; L-valine biosynthesis; L-valine from pyruvate: step 3/4. Its function is as follows. Functions in the biosynthesis of branched-chain amino acids. Catalyzes the dehydration of (2R,3R)-2,3-dihydroxy-3-methylpentanoate (2,3-dihydroxy-3-methylvalerate) into 2-oxo-3-methylpentanoate (2-oxo-3-methylvalerate) and of (2R)-2,3-dihydroxy-3-methylbutanoate (2,3-dihydroxyisovalerate) into 2-oxo-3-methylbutanoate (2-oxoisovalerate), the penultimate precursor to L-isoleucine and L-valine, respectively. In Nitratidesulfovibrio vulgaris (strain ATCC 29579 / DSM 644 / CCUG 34227 / NCIMB 8303 / VKM B-1760 / Hildenborough) (Desulfovibrio vulgaris), this protein is Dihydroxy-acid dehydratase.